Here is a 238-residue protein sequence, read N- to C-terminus: Ribonuclease PH (238 aa).

Phosphate-binding positions include arginine 86 and 124–126 (GTR).

This sequence belongs to the RNase PH family. In terms of assembly, homohexameric ring arranged as a trimer of dimers.

The enzyme catalyses tRNA(n+1) + phosphate = tRNA(n) + a ribonucleoside 5'-diphosphate. In terms of biological role, phosphorolytic 3'-5' exoribonuclease that plays an important role in tRNA 3'-end maturation. Removes nucleotide residues following the 3'-CCA terminus of tRNAs; can also add nucleotides to the ends of RNA molecules by using nucleoside diphosphates as substrates, but this may not be physiologically important. Probably plays a role in initiation of 16S rRNA degradation (leading to ribosome degradation) during starvation. The protein is Ribonuclease PH of Vibrio atlanticus (strain LGP32) (Vibrio splendidus (strain Mel32)).